Reading from the N-terminus, the 86-residue chain is Large ribosomal subunit protein uL23 (86 aa).

Belongs to the universal ribosomal protein uL23 family. Part of the 50S ribosomal subunit. Contacts protein L29.

In terms of biological role, binds to 23S rRNA. One of the proteins that surrounds the polypeptide exit tunnel on the outside of the ribosome. The sequence is that of Large ribosomal subunit protein uL23 from Methanococcus aeolicus (strain ATCC BAA-1280 / DSM 17508 / OCM 812 / Nankai-3).